A 201-amino-acid chain; its full sequence is Recombination protein RecR (201 aa).

Residues 57–72 form a C4-type zinc finger; the sequence is CADCRTFTEQDVCNIC. The 96-residue stretch at 81 to 176 folds into the Toprim domain; sequence GQICVVESPA…SASRIAHGVP (96 aa).

Belongs to the RecR family.

Its function is as follows. May play a role in DNA repair. It seems to be involved in an RecBC-independent recombinational process of DNA repair. It may act with RecF and RecO. The polypeptide is Recombination protein RecR (Enterobacter sp. (strain 638)).